Here is a 325-residue protein sequence, read N- to C-terminus: Palmitoyltransferase PFA3 (325 aa).

Over Met1 to Pro8 the chain is Cytoplasmic. The chain crosses the membrane as a helical span at residues Ile9 to Leu29. Residue Lys30 is a topological domain, lumenal. Residues Val31–Leu51 form a helical membrane-spanning segment. Residues Tyr52–Lys147 are Cytoplasmic-facing. Residues Arg104–Leu154 enclose the DHHC domain. A helical membrane pass occupies residues Phe148–Thr168. Over Trp169–His188 the chain is Lumenal. Residues Leu189–Phe209 traverse the membrane as a helical segment. The Cytoplasmic segment spans residues Asn210–Gln325.

It belongs to the DHHC palmitoyltransferase family. PFA3 subfamily. In terms of processing, autopalmitoylated.

It localises to the vacuole membrane. The catalysed reaction is L-cysteinyl-[protein] + hexadecanoyl-CoA = S-hexadecanoyl-L-cysteinyl-[protein] + CoA. Functionally, palmitoyltransferase specific for VAC8. Palmitoylates VAC8 at one or more of its N-terminal cysteine residues, which is required for its proper membrane localization. This is Palmitoyltransferase PFA3 (PFA3) from Eremothecium gossypii (strain ATCC 10895 / CBS 109.51 / FGSC 9923 / NRRL Y-1056) (Yeast).